We begin with the raw amino-acid sequence, 402 residues long: Sulfate adenylyltransferase (402 aa).

The protein belongs to the sulfate adenylyltransferase family.

The catalysed reaction is sulfate + ATP + H(+) = adenosine 5'-phosphosulfate + diphosphate. Its pathway is sulfur metabolism; hydrogen sulfide biosynthesis; sulfite from sulfate: step 1/3. This chain is Sulfate adenylyltransferase, found in Vesicomyosocius okutanii subsp. Calyptogena okutanii (strain HA).